The primary structure comprises 585 residues: Protein FAM13C (585 aa).

Disordered stretches follow at residues 26 to 45, 83 to 138, and 171 to 216; these read PVSL…ENNK, SMGN…NAFK, and EAAQ…APED. Basic and acidic residues-rich tracts occupy residues 27–45 and 99–112; these read VSLH…ENNK and ESGR…ETEH. A Phosphoserine modification is found at S131. Phosphoserine is present on S238. Disordered stretches follow at residues 250–282, 349–391, and 441–477; these read FNLD…DGKE, EEQG…EETP, and IPTI…DHLT. The segment covering 262–275 has biased composition (polar residues); the sequence is STQQFMMPRSSSRC. Residues S385 and S386 each carry the phosphoserine modification.

The protein belongs to the FAM13 family.

This Homo sapiens (Human) protein is Protein FAM13C (FAM13C).